Consider the following 869-residue polypeptide: Leucine--tRNA ligase (869 aa).

A 'HIGH' region motif is present at residues 42 to 52 (PYPSGKLHMGH). Residues 624–628 (TMSKS) carry the 'KMSKS' region motif. Lys627 serves as a coordination point for ATP.

Belongs to the class-I aminoacyl-tRNA synthetase family.

The protein localises to the cytoplasm. It carries out the reaction tRNA(Leu) + L-leucine + ATP = L-leucyl-tRNA(Leu) + AMP + diphosphate. The chain is Leucine--tRNA ligase from Nitrosomonas europaea (strain ATCC 19718 / CIP 103999 / KCTC 2705 / NBRC 14298).